A 657-amino-acid polypeptide reads, in one-letter code: MLKSGRLNFLKLNINSRLLYSTNPQLTKKVIGIDLGTTNSAVAYIRDSNDKKSATIIENDEGQRTTPSIVAFDVKSSPQNKDQMKTLVGMAAKRQNAINSENTFFATKRLIGRAFNDKEVQRDMAVMPYKIVKCESNGQAYLSTSNGLIQSPSQIASILLKYLKQTSEEYLGEKVNLAVITVPAYFNDSQRQATKDAGKLAGLNVLRVINEPTAAALSFGIDDKRNNGLIAVYDLGGGTFDISILDIEDGVFEVRATNGDTHLGGEDFDNVIVNYIIDTFIHENPEITREEITKNRETMQRLKDVSERAKIDLSHVKKTFIELPFVYKSKHLRVPMTEEELDNMTLSLINRTIPPVKQALKDADIEPEDIDEVILVGGMTRMPKIRSVVKDLFGKSPNSSVNPDETVALGAAIQGGILSGEIKNVLLLDVTPLTLGIETFGGAFSPLIPRNTTVPVKKTEIFSTGVDGQAGVDIKVFQGERGLVRNNKLIGDLKLTGITPLPKGIPQIYVTFDIDADGIINVSAAEKSSGKQQSITVIPNSGLSEEEIAKLIEEANANRAQDNLIRQRLELISKADIMISDTENLFKRYEKLISSEKEYSNIVEDIKALRQAIKNFKANENDMSIDVNGIKKATDALQGRALKLFQSATKNQQNQGK.

This sequence belongs to the heat shock protein 70 family. Interacts with the Fe/S cluster assembly proteins ISU1, MGE1, GRX5 and JAC1.

Its subcellular location is the mitochondrion matrix. It catalyses the reaction ATP + H2O = ADP + phosphate + H(+). Required for the assembly of iron-sulfur (Fe/S) clusters in mitochondria. Assisted by the DnaJ-like co-chaperone JAC1 and the nucleotide exchange factor MGE1, it mediates ATP-dependent Fe-S cluster transfer from the scaffold proteins ISU1/ISU2 to GRX5. In Saccharomyces cerevisiae (strain ATCC 204508 / S288c) (Baker's yeast), this protein is Iron-sulfur cluster biogenesis chaperone, mitochondrial.